Reading from the N-terminus, the 193-residue chain is 7-methyl-GTP pyrophosphatase (193 aa).

D70 serves as the catalytic Proton acceptor.

It belongs to the Maf family. YceF subfamily. The cofactor is a divalent metal cation.

Its subcellular location is the cytoplasm. The catalysed reaction is N(7)-methyl-GTP + H2O = N(7)-methyl-GMP + diphosphate + H(+). Its function is as follows. Nucleoside triphosphate pyrophosphatase that hydrolyzes 7-methyl-GTP (m(7)GTP). May have a dual role in cell division arrest and in preventing the incorporation of modified nucleotides into cellular nucleic acids. The sequence is that of 7-methyl-GTP pyrophosphatase from Vibrio parahaemolyticus serotype O3:K6 (strain RIMD 2210633).